Here is a 212-residue protein sequence, read N- to C-terminus: uncharacterized protein (212 aa).

The 118-residue stretch at 29 to 146 (KGKAGEKLVK…AAFHPKCSLK (118 aa)) folds into the NERD domain.

This is an uncharacterized protein from Bacillus anthracis.